A 367-amino-acid polypeptide reads, in one-letter code: Peptide chain release factor 2 (367 aa).

An N5-methylglutamine modification is found at Q254.

It belongs to the prokaryotic/mitochondrial release factor family. Post-translationally, methylated by PrmC. Methylation increases the termination efficiency of RF2.

Its subcellular location is the cytoplasm. Its function is as follows. Peptide chain release factor 2 directs the termination of translation in response to the peptide chain termination codons UGA and UAA. This chain is Peptide chain release factor 2, found in Leptospira interrogans serogroup Icterohaemorrhagiae serovar Lai (strain 56601).